The primary structure comprises 125 residues: Small ribosomal subunit protein uS11 (125 aa).

The interval 101 to 125 (KDVKDVTPTPHNGTRPPKKILKREK) is disordered. Positions 116 to 125 (PPKKILKREK) are enriched in basic residues.

This sequence belongs to the universal ribosomal protein uS11 family. As to quaternary structure, part of the 30S ribosomal subunit. Interacts with proteins S7 and S18. Binds to IF-3.

Located on the platform of the 30S subunit, it bridges several disparate RNA helices of the 16S rRNA. Forms part of the Shine-Dalgarno cleft in the 70S ribosome. In Mycoplasma sp, this protein is Small ribosomal subunit protein uS11.